The primary structure comprises 414 residues: tRNA(Ile)-lysidine synthase (414 aa).

17–22 provides a ligand contact to ATP; sequence SGGCDS.

This sequence belongs to the tRNA(Ile)-lysidine synthase family.

It localises to the cytoplasm. The catalysed reaction is cytidine(34) in tRNA(Ile2) + L-lysine + ATP = lysidine(34) in tRNA(Ile2) + AMP + diphosphate + H(+). In terms of biological role, ligates lysine onto the cytidine present at position 34 of the AUA codon-specific tRNA(Ile) that contains the anticodon CAU, in an ATP-dependent manner. Cytidine is converted to lysidine, thus changing the amino acid specificity of the tRNA from methionine to isoleucine. This chain is tRNA(Ile)-lysidine synthase, found in Exiguobacterium sibiricum (strain DSM 17290 / CCUG 55495 / CIP 109462 / JCM 13490 / 255-15).